The following is an 879-amino-acid chain: Alanine--tRNA ligase (879 aa).

Residues H565, H569, C674, and H678 each contribute to the Zn(2+) site.

Belongs to the class-II aminoacyl-tRNA synthetase family. Zn(2+) is required as a cofactor.

Its subcellular location is the cytoplasm. The catalysed reaction is tRNA(Ala) + L-alanine + ATP = L-alanyl-tRNA(Ala) + AMP + diphosphate. Its function is as follows. Catalyzes the attachment of alanine to tRNA(Ala) in a two-step reaction: alanine is first activated by ATP to form Ala-AMP and then transferred to the acceptor end of tRNA(Ala). Also edits incorrectly charged Ser-tRNA(Ala) and Gly-tRNA(Ala) via its editing domain. This Gluconobacter oxydans (strain 621H) (Gluconobacter suboxydans) protein is Alanine--tRNA ligase.